The following is a 134-amino-acid chain: Large ribosomal subunit protein eL27 (134 aa).

Residues 5–40 (LKSGKVVVVLSGRFAGKKAVIVRNFDDGTSSRPYGH) form the KOW domain.

This sequence belongs to the eukaryotic ribosomal protein eL27 family.

The chain is Large ribosomal subunit protein eL27 (RPL27) from Pyrobotrys stellatus (Green alga).